An 856-amino-acid chain; its full sequence is Alanine/arginine aminopeptidase (856 aa).

Substrate contacts are provided by residues Glu132 and 264-268; that span reads GAMEN. His300 contacts Zn(2+). Glu301 serves as the catalytic Proton acceptor. 2 residues coordinate Zn(2+): His304 and Glu323.

It belongs to the peptidase M1 family. It depends on Zn(2+) as a cofactor.

Functionally, positive effector of glycogen accumulation. May be involved in nutrient-sensing. The protein is Alanine/arginine aminopeptidase (AAP1) of Saccharomyces cerevisiae (strain ATCC 204508 / S288c) (Baker's yeast).